A 167-amino-acid chain; its full sequence is 3-isopropylmalate dehydratase small subunit (167 aa).

This sequence belongs to the LeuD family. LeuD type 2 subfamily. Heterodimer of LeuC and LeuD.

The enzyme catalyses (2R,3S)-3-isopropylmalate = (2S)-2-isopropylmalate. The protein operates within amino-acid biosynthesis; L-leucine biosynthesis; L-leucine from 3-methyl-2-oxobutanoate: step 2/4. Functionally, catalyzes the isomerization between 2-isopropylmalate and 3-isopropylmalate, via the formation of 2-isopropylmaleate. The polypeptide is 3-isopropylmalate dehydratase small subunit (Nitratidesulfovibrio vulgaris (strain ATCC 29579 / DSM 644 / CCUG 34227 / NCIMB 8303 / VKM B-1760 / Hildenborough) (Desulfovibrio vulgaris)).